A 433-amino-acid polypeptide reads, in one-letter code: 5-methylthioadenosine/S-adenosylhomocysteine deaminase (433 aa).

Zn(2+)-binding residues include His-67 and His-69. Substrate-binding residues include Glu-96, Arg-148, and His-187. His-214 is a Zn(2+) binding site. Substrate-binding residues include Glu-217 and Asp-302. Asp-302 serves as a coordination point for Zn(2+).

This sequence belongs to the metallo-dependent hydrolases superfamily. MTA/SAH deaminase family. Zn(2+) serves as cofactor.

It catalyses the reaction S-adenosyl-L-homocysteine + H2O + H(+) = S-inosyl-L-homocysteine + NH4(+). The enzyme catalyses S-methyl-5'-thioadenosine + H2O + H(+) = S-methyl-5'-thioinosine + NH4(+). Functionally, catalyzes the deamination of 5-methylthioadenosine and S-adenosyl-L-homocysteine into 5-methylthioinosine and S-inosyl-L-homocysteine, respectively. Is also able to deaminate adenosine. This Carboxydothermus hydrogenoformans (strain ATCC BAA-161 / DSM 6008 / Z-2901) protein is 5-methylthioadenosine/S-adenosylhomocysteine deaminase.